Here is a 776-residue protein sequence, read N- to C-terminus: MTISPPERGEKAKPIYDQPVDRDHVPADFEKFEQPGFFSKSLAKGPNSTTWIWNLHADAHDFDTHIGDLEETSRKIFSAHFGHLAIVFIWLSGAFFHGARFSNYSGWLADPTHVKASAQVVWPIVGQEIMNADVGAGFNGIQITSGIFQMWRAWGITSETELMALATGALIMAGLVLHGGIFHYHKAAPKLEWFKKIESMLQHHQIGLFGLGSLGWTGHLIHVANPTNALLDAIDAGTPMVLDGKTIATAADIPLPHELYNADLVGQIYPGLASGIGNFFSANWWAFSDFLTNNGGVNPVTGALWSTDVAHHHLAWAVFLMFGGHVYRSRFGIGHSMKEIMGNVKGDPLLFPAPNGHKGLFEFLSNSWHAQLAVNLACIGSGSIVVAHHMYSLPPYPYLATDYPTVLGLFTHHMWIGGLMICGAAAHAGIAVIRDYDVSVHVDNVLDRMFKARDAIISHLNWVCMFLGFHSFGLYIHNDSMRALGRSQDMFSDSAIQLQPVLAQWIQSLWASSIGTSSVVGTTTGLPGAVSDVFNGGVVAVGGKVALMAIPLGTADLMIHHIHAFTIHVTCLILLKGVLFARSSRLVPDKANLGFRFSCDGPGRGGTCQVSSWDHVFLGLFWMYNSLSMVIFYFSWKMQSDVWGTVNSDGSVTHLVSGNFAQSAITVNGWFRDFLWAQSSQVLTSYGTGLSGYGLLFLGGHFVWAFSLMFLFSGRGYWQELFESIIWAHNKLKLAPTIQPRALSITQGRAVGVTHFLFGGIVTTWAFFHARLLGLG.

8 helical membrane passes run 76–99 (IFSA…FHGA), 162–185 (LMAL…FHYH), 201–225 (LQHH…HVAN), 309–327 (VAHH…GHVY), 368–391 (WHAQ…HHMY), 407–433 (LGLF…IAVI), 455–477 (AIIS…LYIH), and 557–575 (LMIH…LILL). [4Fe-4S] cluster-binding residues include Cys-599 and Cys-608. A run of 2 helical transmembrane segments spans residues 615-636 (HVFL…YFSW) and 690-712 (LSGY…MFLF). His-701 contributes to the divinylchlorophyll a' binding site. The divinyl chlorophyll a site is built by Met-709 and Tyr-717. Trp-718 contributes to the phylloquinone binding site. The chain crosses the membrane as a helical span at residues 750-770 (AVGVTHFLFGGIVTTWAFFHA).

It belongs to the PsaA/PsaB family. In terms of assembly, the PsaA/B heterodimer binds the P700 divinyl chlorophyll special pair and subsequent electron acceptors. PSI consists of a core antenna complex that captures photons, and an electron transfer chain that converts photonic excitation into a charge separation. The cyanobacterial PSI reaction center is composed of one copy each of PsaA,B,C,D,E,F,I,J,K,L,M and X, and forms trimeric complexes. It depends on PSI electron transfer chain: 5 divinyl chlorophyll a, 1 divinyl chlorophyll a', 2 phylloquinones and 3 4Fe-4S clusters. PSI core antenna: 90 divinyl chlorophyll a, 22 carotenoids, 3 phospholipids and 1 galactolipid. P700 is a divinyl chlorophyll a/divinyl chlorophyll a' dimer, A0 is one or more divinyl chlorophyll a, A1 is one or both phylloquinones and FX is a shared 4Fe-4S iron-sulfur center. as a cofactor.

It is found in the cellular thylakoid membrane. It carries out the reaction reduced [plastocyanin] + hnu + oxidized [2Fe-2S]-[ferredoxin] = oxidized [plastocyanin] + reduced [2Fe-2S]-[ferredoxin]. PsaA and PsaB bind P700, the primary electron donor of photosystem I (PSI), as well as the electron acceptors A0, A1 and FX. PSI is a plastocyanin/cytochrome c6-ferredoxin oxidoreductase, converting photonic excitation into a charge separation, which transfers an electron from the donor P700 chlorophyll pair to the spectroscopically characterized acceptors A0, A1, FX, FA and FB in turn. Oxidized P700 is reduced on the lumenal side of the thylakoid membrane by plastocyanin or cytochrome c6. The sequence is that of Photosystem I P700 chlorophyll a apoprotein A1 from Prochlorococcus marinus (strain MIT 9303).